Here is a 625-residue protein sequence, read N- to C-terminus: Probable potassium transport system protein Kup 2 (625 aa).

The next 12 membrane-spanning stretches (helical) occupy residues 10–30 (LAAL…TSPL), 47–67 (GVHL…VVTL), 104–124 (VLLL…VITP), 140–160 (PAFK…LFAV), 172–192 (FGPV…AEII), 214–234 (GWHM…VEAL), 250–270 (WLGL…ALLM), 283–303 (LFPQ…TVIA), 347–367 (WLLL…SALA), 369–389 (AYGI…FFVV), 396–416 (PLPV…LLVV), and 422–442 (FFQG…VMAT).

It belongs to the HAK/KUP transporter (TC 2.A.72) family.

The protein localises to the cell inner membrane. The catalysed reaction is K(+)(in) + H(+)(in) = K(+)(out) + H(+)(out). Functionally, transport of potassium into the cell. Likely operates as a K(+):H(+) symporter. In Albidiferax ferrireducens (strain ATCC BAA-621 / DSM 15236 / T118) (Rhodoferax ferrireducens), this protein is Probable potassium transport system protein Kup 2.